We begin with the raw amino-acid sequence, 183 residues long: Threonylcarbamoyl-AMP synthase (183 aa).

The 183-residue stretch at 1–183 (MNREQIANAL…LRTNQLFRQG (183 aa)) folds into the YrdC-like domain.

It belongs to the SUA5 family. TsaC subfamily.

The protein resides in the cytoplasm. The catalysed reaction is L-threonine + hydrogencarbonate + ATP = L-threonylcarbamoyladenylate + diphosphate + H2O. Required for the formation of a threonylcarbamoyl group on adenosine at position 37 (t(6)A37) in tRNAs that read codons beginning with adenine. Catalyzes the conversion of L-threonine, HCO(3)(-)/CO(2) and ATP to give threonylcarbamoyl-AMP (TC-AMP) as the acyladenylate intermediate, with the release of diphosphate. In Haemophilus influenzae (strain PittEE), this protein is Threonylcarbamoyl-AMP synthase.